Consider the following 61-residue polypeptide: ERMES regulator 1 (61 aa).

Residues 1–20 lie on the Mitochondrial intermembrane side of the membrane; that stretch reads MLPNLRRIFASFRTEEEERS. A helical transmembrane segment spans residues 21 to 43; it reads YSRKAFFHLIGYITCSVLFSWLV. Over 44–61 the chain is Cytoplasmic; sequence RKKVISSPVVSSPIHALS.

This sequence belongs to the EMR1 family. As to quaternary structure, interacts with the ER-mitochondria encounter structure (ERMES) complex. Interacts with mdm12. Interacts with mdm34.

It localises to the mitochondrion outer membrane. In terms of biological role, mediates the formation of endoplasmic reticulum (ER)-mitochondria encounter structure (ERMES) foci, thereby contributing to the formation of ER-mitochondrial contact sites. The polypeptide is ERMES regulator 1 (Schizosaccharomyces pombe (strain 972 / ATCC 24843) (Fission yeast)).